Here is a 582-residue protein sequence, read N- to C-terminus: External alternative NAD(P)H-ubiquinone oxidoreductase B2, mitochondrial (582 aa).

Residues 1 to 38 (MRNFSVFERFSKAFKDHPSLTRILVVSTISGGGLIAYS) constitute a mitochondrion transit peptide. Residue 60 to 90 (KVVLLGTGWAGTSFLKNLNNSQYEVQIISPR) participates in FAD binding. An NAD(+)-binding site is contributed by 223–259 (LHFVVVGGGPTGVEFAAELHDFVTEDLVSLYPRAKGS). The EF-hand domain maps to 379–414 (KVMEDVSAIFSKADKDKSGTLTLKEFQEAMDDICVR). 5 residues coordinate Ca(2+): Asp392, Asp394, Ser396, Thr398, and Glu403. The short motif at 573-582 (FIFGRDSSSI) is the Microbody targeting signal element.

Belongs to the NADH dehydrogenase family. FAD serves as cofactor. As to expression, mostly expressed in seedlings and roots and, to a lower extent, in cotyledons, leaves, stems, buds and flowers.

Its subcellular location is the mitochondrion inner membrane. The protein resides in the peroxisome. The enzyme catalyses a quinone + NADH + H(+) = a quinol + NAD(+). The catalysed reaction is a ubiquinone + NADH + H(+) = a ubiquinol + NAD(+). NADPH oxidase activity is stimulated by calcium ions. Functionally, alternative NADH-ubiquinone oxidoreductase which catalyzes the oxidation of mitochondrial NADH does not translocate protons across the inner mitochondrial membrane. Calcium-dependent NAD(P)H dehydrogenase; more efficient on NADH. Binds calcium ions. The polypeptide is External alternative NAD(P)H-ubiquinone oxidoreductase B2, mitochondrial (NDB2) (Arabidopsis thaliana (Mouse-ear cress)).